We begin with the raw amino-acid sequence, 106 residues long: MTDKAGDWQEHGPQVEEAPPQVKRPPLFKVIILNDDYTPMDFVVEVLQKFFHMDRARATQVMLHVHTRGEGVCGVFSRDVAETKVNQVNDWSRQHEHPLMCTLKEA.

Basic and acidic residues predominate over residues 1 to 14 (MTDKAGDWQEHGPQ). Positions 1–21 (MTDKAGDWQEHGPQVEEAPPQ) are disordered.

The protein belongs to the ClpS family. Binds to the N-terminal domain of the chaperone ClpA.

In terms of biological role, involved in the modulation of the specificity of the ClpAP-mediated ATP-dependent protein degradation. This is ATP-dependent Clp protease adapter protein ClpS from Alkalilimnicola ehrlichii (strain ATCC BAA-1101 / DSM 17681 / MLHE-1).